The sequence spans 246 residues: Uridylate kinase (246 aa).

19 to 22 provides a ligand contact to ATP; that stretch reads KISG. Glycine 61 is a UMP binding site. 2 residues coordinate ATP: glycine 62 and arginine 66. UMP is bound by residues aspartate 81 and 142–149; that span reads TGNPFFTT. ATP-binding residues include threonine 169, glutamine 170, tyrosine 175, and aspartate 178.

It belongs to the UMP kinase family. As to quaternary structure, homohexamer.

It is found in the cytoplasm. The enzyme catalyses UMP + ATP = UDP + ADP. It participates in pyrimidine metabolism; CTP biosynthesis via de novo pathway; UDP from UMP (UMPK route): step 1/1. With respect to regulation, inhibited by UTP. Its function is as follows. Catalyzes the reversible phosphorylation of UMP to UDP. This Wolbachia sp. subsp. Brugia malayi (strain TRS) protein is Uridylate kinase.